We begin with the raw amino-acid sequence, 572 residues long: Squalene synthase (572 aa).

2 helical membrane passes run 316 to 336 and 492 to 512; these read SVFN…ELMF and FFLI…LITW.

Belongs to the phytoene/squalene synthase family. In terms of assembly, monomer. Requires Mg(2+) as cofactor.

The protein localises to the endoplasmic reticulum membrane. The catalysed reaction is 2 (2E,6E)-farnesyl diphosphate + NADPH + H(+) = squalene + 2 diphosphate + NADP(+). It catalyses the reaction 2 (2E,6E)-farnesyl diphosphate + NADH + H(+) = squalene + 2 diphosphate + NAD(+). The protein operates within terpene metabolism; lanosterol biosynthesis; lanosterol from farnesyl diphosphate: step 1/3. Catalyzes the condensation of 2 two farnesyl pyrophosphate moieties to form squalene. It is the first committed enzyme of the sterol biosynthesis pathway. Required for the biosynthesis of ergosterol. This is Squalene synthase (ERG9) from Mycosarcoma maydis (Corn smut fungus).